Reading from the N-terminus, the 197-residue chain is Small ribosomal subunit protein uS4A (197 aa).

The 75-residue stretch at R107 to A181 folds into the S4 RNA-binding domain. Residues P160–E197 are disordered. K180 participates in a covalent cross-link: Glycyl lysine isopeptide (Lys-Gly) (interchain with G-Cter in ubiquitin). S184 bears the Phosphoserine mark. Residues A187 to E197 are compositionally biased toward acidic residues.

The protein belongs to the universal ribosomal protein uS4 family. Component of the small ribosomal subunit (SSU). Mature yeast ribosomes consist of a small (40S) and a large (60S) subunit. The 40S small subunit contains 1 molecule of ribosomal RNA (18S rRNA) and 33 different proteins (encoded by 57 genes). The large 60S subunit contains 3 rRNA molecules (25S, 5.8S and 5S rRNA) and 46 different proteins (encoded by 81 genes). Interacts with snoRNA U3. uS11 interacts with MPP10. Component of the ribosomal small subunit (SSU) processome composed of at least 40 protein subunits and snoRNA U3.

The protein localises to the cytoplasm. The protein resides in the nucleus. Its subcellular location is the nucleolus. Its function is as follows. Component of the ribosome, a large ribonucleoprotein complex responsible for the synthesis of proteins in the cell. The small ribosomal subunit (SSU) binds messenger RNAs (mRNAs) and translates the encoded message by selecting cognate aminoacyl-transfer RNA (tRNA) molecules. The large subunit (LSU) contains the ribosomal catalytic site termed the peptidyl transferase center (PTC), which catalyzes the formation of peptide bonds, thereby polymerizing the amino acids delivered by tRNAs into a polypeptide chain. The nascent polypeptides leave the ribosome through a tunnel in the LSU and interact with protein factors that function in enzymatic processing, targeting, and the membrane insertion of nascent chains at the exit of the ribosomal tunnel. uS4 is involved in nucleolar processing of pre-18S ribosomal RNA and ribosome assembly. This is Small ribosomal subunit protein uS4A from Saccharomyces cerevisiae (strain ATCC 204508 / S288c) (Baker's yeast).